Here is a 322-residue protein sequence, read N- to C-terminus: ATP-dependent 6-phosphofructokinase (322 aa).

ATP contacts are provided by residues glycine 12, 73 to 74 (RF), and 103 to 106 (GDGT). Mg(2+) is bound at residue aspartate 104. Position 126 to 128 (126 to 128 (TID)) interacts with substrate. The active-site Proton acceptor is aspartate 128. Arginine 155 is a binding site for ADP. Substrate is bound by residues arginine 163 and 170–172 (MGR). ADP-binding positions include 186 to 188 (GSE), lysine 212, and 214 to 216 (KPS). Residues glutamate 223, arginine 245, and 251-254 (HTQR) contribute to the substrate site.

This sequence belongs to the phosphofructokinase type A (PFKA) family. ATP-dependent PFK group I subfamily. Prokaryotic clade 'B1' sub-subfamily. In terms of assembly, homotetramer. Mg(2+) serves as cofactor.

The protein localises to the cytoplasm. The catalysed reaction is beta-D-fructose 6-phosphate + ATP = beta-D-fructose 1,6-bisphosphate + ADP + H(+). It participates in carbohydrate degradation; glycolysis; D-glyceraldehyde 3-phosphate and glycerone phosphate from D-glucose: step 3/4. Its activity is regulated as follows. Allosterically activated by ADP and other diphosphonucleosides, and allosterically inhibited by phosphoenolpyruvate. In terms of biological role, catalyzes the phosphorylation of D-fructose 6-phosphate to fructose 1,6-bisphosphate by ATP, the first committing step of glycolysis. In Mesomycoplasma hyopneumoniae (strain 7448) (Mycoplasma hyopneumoniae), this protein is ATP-dependent 6-phosphofructokinase.